An 808-amino-acid polypeptide reads, in one-letter code: Probable inorganic carbon transporter subunit DabA (808 aa).

Residues C334, D336, H494, and C509 each coordinate Zn(2+).

Belongs to the inorganic carbon transporter (TC 9.A.2) DabA family. Forms a complex with DabB. Requires Zn(2+) as cofactor.

The protein resides in the cell inner membrane. Functionally, part of an energy-coupled inorganic carbon pump. This Allorhizobium ampelinum (strain ATCC BAA-846 / DSM 112012 / S4) (Agrobacterium vitis (strain S4)) protein is Probable inorganic carbon transporter subunit DabA.